A 356-amino-acid chain; its full sequence is Leucoanthocyanidin dioxygenase (356 aa).

2 residues coordinate substrate: Y142 and K213. A Fe2OG dioxygenase domain is found at 208-307 (LLLQMKINYY…RISWAVFCEP (100 aa)). 215–217 (NYY) provides a ligand contact to 2-oxoglutarate. H232 lines the Fe cation pocket. T233 is a substrate binding site. D234 and H288 together coordinate Fe cation. A 2-oxoglutarate-binding site is contributed by 298-300 (RIS). Substrate contacts are provided by E306 and K341.

Belongs to the iron/ascorbate-dependent oxidoreductase family. L-ascorbate is required as a cofactor. The cofactor is Fe(2+). In terms of tissue distribution, expressed in young seedlings (at protein level).

The catalysed reaction is a (2R,3S,4S)-leucoanthocyanidin + 2-oxoglutarate + O2 = a 4-H-anthocyanidin with a 3-hydroxy group + succinate + CO2 + 2 H2O. It carries out the reaction (2R,3S,4S)-3,4-leucopelargonidin + 2-oxoglutarate + O2 = (4S)-2,3-dehydroleucopelargonidin + succinate + CO2 + H2O + H(+). The enzyme catalyses (2R,3S,4S)-leucocyanidin + 2-oxoglutarate + O2 = (4S)-2,3-dehydroleucocyanidin + succinate + CO2 + H2O + H(+). It functions in the pathway pigment biosynthesis; anthocyanin biosynthesis. Involved in anthocyanin and protoanthocyanidin biosynthesis by catalyzing the oxidation of leucoanthocyanidins into anthocyanidins. Possesses low flavonol synthase activity in vitro towards dihydrokaempferol and dihydroquercetin producing kaempferol and quercitin, respectively. This Arabidopsis thaliana (Mouse-ear cress) protein is Leucoanthocyanidin dioxygenase (LDOX).